Consider the following 533-residue polypeptide: Large neutral amino acids transporter small subunit 2 (533 aa).

Residues 1-33 (MEKGTRQRNNTAKNHPDRGSDTSPEAEASSGGG) form a disordered region. Residues 1–45 (MEKGTRQRNNTAKNHPDRGSDTSPEAEASSGGGGVALKKEIGLVS) lie on the Cytoplasmic side of the membrane. Residues S20, S23, S29, and S30 each carry the phosphoserine modification. The chain crosses the membrane as a helical span at residues 46–66 (ACGIIVGNIIGSGIFVSPKGV). I54 provides a ligand contact to L-leucine. Topologically, residues 67–74 (LENAGSVG) are extracellular. Residues 75–96 (LALIVWIVTGVITAVGALCYAE) traverse the membrane as a helical segment. The Cytoplasmic portion of the chain corresponds to 97 to 117 (LGVTIPKSGGDYSYVKDIFGG). A helical transmembrane segment spans residues 118-150 (LAGFLRLWIAVLVIYPTNQAVIALTFSNYVLQP). N135 is a binding site for L-tryptophan. The Extracellular segment spans residues 151–158 (LFPTCFPP). Residues 159–179 (ESGLRLLAAICLLLLTWVNCS) traverse the membrane as a helical segment. At 180–182 (SVR) the chain is on the cytoplasmic side. Residues 183–211 (WATRVQDIFTAGKLLALALIIIMGVVQIC) traverse the membrane as a helical segment. Topologically, residues 212 to 231 (KGEFFWLEPKNAFENFQEPD) are extracellular. Residues 232–253 (IGLVALAFLQGSFAYGGWNFLN) form a helical membrane-spanning segment. Position 247 (G247) interacts with L-leucine. The Cytoplasmic segment spans residues 254 to 266 (YVTEELVDPYKNL). The helical transmembrane segment at 267–288 (PRAIFISIPLVTFVYVFANIAY) threads the bilayer. Topologically, residues 289–313 (VTAMSPQELLASNAVAVTFGEKLLG) are extracellular. A helical transmembrane segment spans residues 314 to 339 (VMAWIMPISVALSTFGGVNGSLFTSS). The Cytoplasmic segment spans residues 340–365 (RLFFAGAREGHLPSVLAMIHVKRCTP). Residues 366 to 383 (IPALLFTCLSTLLMLVTS) traverse the membrane as a helical segment. Residues 384–387 (DMYT) lie on the Extracellular side of the membrane. A helical membrane pass occupies residues 388 to 409 (LINYVGFINYLFYGVTVAGQIV). N396 contributes to the L-tryptophan binding site. Residues 410-424 (LRWKKPDIPRPIKIS) lie on the Cytoplasmic side of the membrane. 2 helical membrane-spanning segments follow: residues 425-447 (LLFP…WSEP) and 448-467 (VVCG…YFLG). The Cytoplasmic portion of the chain corresponds to 468–533 (VYWQHKPKCF…VKDPDSEEQP (66 aa)). Residues 500-533 (GDSGTEETIDDVEEQHKPIFQPTPVKDPDSEEQP) are disordered. Acidic residues predominate over residues 502 to 512 (SGTEETIDDVE). S529 is modified (phosphoserine).

This sequence belongs to the amino acid-polyamine-organocation (APC) superfamily. L-type amino acid transporter (LAT) (TC 2.A.3.8) family. As to quaternary structure, disulfide-linked heterodimer composed of the catalytic light chain subunit SLC7A8 and the heavy chain subunit SLC3A2. SLC3A2 acts as a chaperone for correct plasma membrane trafficking and stabilization of SLC7A8 and modulates the substrate affinity and specificity of SLC7A8. ICAM-1 associates with the heterodimer SLC3A2/SLC7A8; facilitates leucine uptake. In terms of tissue distribution, expression is seen in jejunum mucosa and the epithelial cells of the jejunum, ileum and colon, as well as in kidney, placenta, brain, testis and skeletal muscle. Expressed in retina, inner blood-retinal barrier of retina, retinal vascular endothelial cells. Also expressed in the intestinal epithelial cell line IEC-6 and in the retinal capillary endothelial cell line TR-iBRB2.

The protein localises to the cell membrane. It is found in the basolateral cell membrane. The catalysed reaction is L-dopa(out) + L-phenylalanine(in) = L-dopa(in) + L-phenylalanine(out). The enzyme catalyses 3,3'-diiodo-L-thyronine(out) = 3,3'-diiodo-L-thyronine(in). It carries out the reaction L-histidine(in) + L-phenylalanine(out) = L-histidine(out) + L-phenylalanine(in). It catalyses the reaction L-tryptophan(in) + L-phenylalanine(out) = L-tryptophan(out) + L-phenylalanine(in). The catalysed reaction is L-isoleucine(in) + L-phenylalanine(out) = L-isoleucine(out) + L-phenylalanine(in). The enzyme catalyses L-valine(in) + L-phenylalanine(out) = L-valine(out) + L-phenylalanine(in). It carries out the reaction L-leucine(in) + L-phenylalanine(out) = L-leucine(out) + L-phenylalanine(in). It catalyses the reaction L-glutamine(in) + L-phenylalanine(out) = L-glutamine(out) + L-phenylalanine(in). The catalysed reaction is L-cysteine(in) + L-phenylalanine(out) = L-cysteine(out) + L-phenylalanine(in). The enzyme catalyses L-phenylalanine(out) + L-methionine(in) = L-phenylalanine(in) + L-methionine(out). It carries out the reaction L-leucine(out) + L-methionine(in) = L-leucine(in) + L-methionine(out). It catalyses the reaction L-cysteine(out) + L-methionine(in) = L-cysteine(in) + L-methionine(out). The catalysed reaction is S-methylmercury-L-cysteine(out) + L-methionine(in) = S-methylmercury-L-cysteine(in) + L-methionine(out). The enzyme catalyses S-methylmercury-L-cysteine(in) + L-leucine(out) = S-methylmercury-L-cysteine(out) + L-leucine(in). It carries out the reaction S-methylmercury-L-cysteine(in) + L-phenylalanine(out) = S-methylmercury-L-cysteine(out) + L-phenylalanine(in). It catalyses the reaction L-phenylalanine(out) + L-serine(in) = L-phenylalanine(in) + L-serine(out). The catalysed reaction is L-phenylalanine(out) + glycine(in) = L-phenylalanine(in) + glycine(out). The enzyme catalyses L-phenylalanine(out) + L-alanine(in) = L-phenylalanine(in) + L-alanine(out). It carries out the reaction 3,3',5-triiodo-L-thyronine(out) = 3,3',5-triiodo-L-thyronine(in). Leucine transport activity is inhibited by 2-amino-bicyclo-(2,2,1)-heptane-2-carboxylate (BCH), glycine, L-isomers of the neutral amino acids and histidine. Functionally, associates with SLC3A2 to form a functional heterodimeric complex that translocates small and large neutral amino acids with broad specificity and a stoichiometry of 1:1. Functions as amino acid antiporter mediating the influx of extracellular essential amino acids mainly in exchange with the efflux of highly concentrated intracellular amino acids. Has relatively symmetrical selectivities but strongly asymmetrical substrate affinities at both the intracellular and extracellular sides of the transporter. This asymmetry allows SLC7A8 to regulate intracellular amino acid pools (mM concentrations) by exchange with external amino acids (uM concentration range), equilibrating the relative concentrations of different amino acids across the plasma membrane instead of mediating their net uptake. May play an essential role in the reabsorption of neutral amino acids from the epithelial cells to the bloodstream in the kidney. Involved in the uptake of methylmercury (MeHg) when administered as the L-cysteine or D,L-homocysteine complexes, and hence plays a role in metal ion homeostasis and toxicity. Involved in the cellular activity of small molecular weight nitrosothiols, via the stereoselective transport of L-nitrosocysteine (L-CNSO) across the transmembrane. Imports the thyroid hormone diiodothyronine (T2) and to a smaller extent triiodothyronine (T3) but not rT 3 or thyroxine (T4). Mediates the uptake of L-DOPA. May participate in auditory function. The chain is Large neutral amino acids transporter small subunit 2 (Slc7a8) from Rattus norvegicus (Rat).